The sequence spans 338 residues: Phenylalanine--tRNA ligase alpha subunit (338 aa).

Glu-253 lines the Mg(2+) pocket.

Belongs to the class-II aminoacyl-tRNA synthetase family. Phe-tRNA synthetase alpha subunit type 1 subfamily. Tetramer of two alpha and two beta subunits. Requires Mg(2+) as cofactor.

It is found in the cytoplasm. The catalysed reaction is tRNA(Phe) + L-phenylalanine + ATP = L-phenylalanyl-tRNA(Phe) + AMP + diphosphate + H(+). This chain is Phenylalanine--tRNA ligase alpha subunit, found in Geobacter sp. (strain M21).